The sequence spans 159 residues: MKVKLICVGKLKERYLKDGISEYQKRLSRFCQFEMIELTDERTPDKANFADNQLIMSKEAQRIHKKIGERDFVIALAIEGKQFPSETFSELISGVTVKGYSTITFIIGGSLGLDSIIKKRADMLMSFGLLTLPHQLMRLVLTEQIYRAFMITKGSPYHK.

Residues leucine 76, glycine 108, and 127–132 (FGLLTL) each bind S-adenosyl-L-methionine.

Belongs to the RNA methyltransferase RlmH family. In terms of assembly, homodimer.

It localises to the cytoplasm. The enzyme catalyses pseudouridine(1915) in 23S rRNA + S-adenosyl-L-methionine = N(3)-methylpseudouridine(1915) in 23S rRNA + S-adenosyl-L-homocysteine + H(+). Specifically methylates the pseudouridine at position 1915 (m3Psi1915) in 23S rRNA. In Streptococcus pyogenes serotype M18 (strain MGAS8232), this protein is Ribosomal RNA large subunit methyltransferase H.